The sequence spans 139 residues: uncharacterized protein (139 aa).

It is found in the mitochondrion. This is an uncharacterized protein from Marchantia polymorpha (Common liverwort).